A 109-amino-acid polypeptide reads, in one-letter code: Cell cycle protein GpsB (109 aa).

Residues Ile-36–Lys-63 are a coiled coil.

This sequence belongs to the GpsB family. Forms polymers through the coiled coil domains. Interacts with PBP1, MreC and EzrA.

Its subcellular location is the cytoplasm. In terms of biological role, divisome component that associates with the complex late in its assembly, after the Z-ring is formed, and is dependent on DivIC and PBP2B for its recruitment to the divisome. Together with EzrA, is a key component of the system that regulates PBP1 localization during cell cycle progression. Its main role could be the removal of PBP1 from the cell pole after pole maturation is completed. Also contributes to the recruitment of PBP1 to the division complex. Not essential for septum formation. In Streptococcus pneumoniae serotype 4 (strain ATCC BAA-334 / TIGR4), this protein is Cell cycle protein GpsB.